Here is a 438-residue protein sequence, read N- to C-terminus: Trigger factor (438 aa).

Positions 163-249 (EDFVLIDYEG…LKEIRKQILP (87 aa)) constitute a PPIase FKBP-type domain.

It belongs to the FKBP-type PPIase family. Tig subfamily.

Its subcellular location is the cytoplasm. The catalysed reaction is [protein]-peptidylproline (omega=180) = [protein]-peptidylproline (omega=0). In terms of biological role, involved in protein export. Acts as a chaperone by maintaining the newly synthesized protein in an open conformation. Functions as a peptidyl-prolyl cis-trans isomerase. This is Trigger factor from Desulfatibacillum aliphaticivorans.